The following is a 261-amino-acid chain: uncharacterized protein (261 aa).

Residues aspartate 43, histidine 45, aspartate 75, asparagine 106, histidine 197, and histidine 199 each contribute to the a divalent metal cation site.

The protein belongs to the metallophosphoesterase superfamily. A divalent metal cation serves as cofactor.

This is an uncharacterized protein from Aquifex aeolicus (strain VF5).